A 299-amino-acid chain; its full sequence is Acetylglutamate kinase (299 aa).

Substrate-binding positions include 62–63 (GG), R84, and N188.

This sequence belongs to the acetylglutamate kinase family. ArgB subfamily.

The protein localises to the cytoplasm. It catalyses the reaction N-acetyl-L-glutamate + ATP = N-acetyl-L-glutamyl 5-phosphate + ADP. The protein operates within amino-acid biosynthesis; L-arginine biosynthesis; N(2)-acetyl-L-ornithine from L-glutamate: step 2/4. Its function is as follows. Catalyzes the ATP-dependent phosphorylation of N-acetyl-L-glutamate. This chain is Acetylglutamate kinase, found in Methanosarcina acetivorans (strain ATCC 35395 / DSM 2834 / JCM 12185 / C2A).